Here is a 441-residue protein sequence, read N- to C-terminus: MCVCQTMEVGQYGKNASRAGDRGVLLEPFIHQVGGHSSMMRYDDHTVCKPLISREQRFYESLPPEMKEFTPEYKGVVSVCFEGDSDGYINLVAYPYVESETVEQDDTTEREQPRRKHSRRSLHRSGSGSDHKEEKASLSLETSESSQEAKSPKVELHSHSEVPFQMLDGNSGLSSEKISHNPWSLRCHKQQLSRMRSESKDRKLYKFLLLENVVHHFKYPCVLDLKMGTRQHGDDASAEKAARQMRKCEQSTSATLGVRVCGMQVYQLDTGHYLCRNKYYGRGLSIEGFRNALYQYLHNGLDLRRDLFEPILSKLRGLKAVLERQASYRFYSSSLLVIYDGKECRAESCLDRRSEMRLKHLDMVLPEVASSCGPSTSPSNTSPEAGPSSQPKVDVRMIDFAHSTFKGFRDDPTVHDGPDRGYVFGLENLISIMEQMRDENQ.

Residues 100-175 form a disordered region; the sequence is ETVEQDDTTE…MLDGNSGLSS (76 aa). Over residues 113 to 123 the composition is skewed to basic residues; sequence PRRKHSRRSLH. Positions 137–149 are enriched in low complexity; sequence SLSLETSESSQEA. Over residues 150 to 160 the composition is skewed to basic and acidic residues; the sequence is KSPKVELHSHS. Ser151 carries the phosphoserine modification. 220–228 is a substrate binding site; the sequence is PCVLDLKMG. Residues 370-392 form a disordered region; sequence SSCGPSTSPSNTSPEAGPSSQPK. A compositionally biased stretch (polar residues) spans 372-391; that stretch reads CGPSTSPSNTSPEAGPSSQP.

This sequence belongs to the inositol phosphokinase (IPK) family.

It localises to the cytoplasm. It is found in the nucleus. It carries out the reaction 1D-myo-inositol hexakisphosphate + ATP = 5-diphospho-1D-myo-inositol 1,2,3,4,6-pentakisphosphate + ADP. The enzyme catalyses 1-diphospho-1D-myo-inositol 2,3,4,5,6-pentakisphosphate + ATP + H(+) = 1,5-bis(diphospho)-1D-myo-inositol 2,3,4,6-tetrakisphosphate + ADP. Converts inositol hexakisphosphate (InsP6) to diphosphoinositol pentakisphosphate (InsP7/PP-InsP5). Converts 1,3,4,5,6-pentakisphosphate (InsP5) to PP-InsP4. The polypeptide is Inositol hexakisphosphate kinase 1 (IP6K1) (Homo sapiens (Human)).